A 451-amino-acid polypeptide reads, in one-letter code: Bifunctional protein GlmU (451 aa).

The interval 1–229 is pyrophosphorylase; it reads MERFAVILAA…FDETIGVNDR (229 aa). Residues 8-11, Lys22, Gln72, and 77-78 each bind UDP-N-acetyl-alpha-D-glucosamine; these read LAAG and GT. Residue Asp102 participates in Mg(2+) binding. UDP-N-acetyl-alpha-D-glucosamine is bound by residues Gly139, Glu154, Asn169, and Asn227. Asn227 is a binding site for Mg(2+). The segment at 230–250 is linker; the sequence is VALSQAEAIMRKRTNERLMRE. Positions 251 to 451 are N-acetyltransferase; it reads GVTFMDPAST…QTNKEGYTKR (201 aa). UDP-N-acetyl-alpha-D-glucosamine contacts are provided by Arg332 and Lys350. The active-site Proton acceptor is the His362. Positions 365 and 376 each coordinate UDP-N-acetyl-alpha-D-glucosamine. Acetyl-CoA is bound by residues 385–386, Ala422, and Arg439; that span reads NY.

This sequence in the N-terminal section; belongs to the N-acetylglucosamine-1-phosphate uridyltransferase family. It in the C-terminal section; belongs to the transferase hexapeptide repeat family. Homotrimer. It depends on Mg(2+) as a cofactor.

It localises to the cytoplasm. It catalyses the reaction alpha-D-glucosamine 1-phosphate + acetyl-CoA = N-acetyl-alpha-D-glucosamine 1-phosphate + CoA + H(+). The catalysed reaction is N-acetyl-alpha-D-glucosamine 1-phosphate + UTP + H(+) = UDP-N-acetyl-alpha-D-glucosamine + diphosphate. It participates in nucleotide-sugar biosynthesis; UDP-N-acetyl-alpha-D-glucosamine biosynthesis; N-acetyl-alpha-D-glucosamine 1-phosphate from alpha-D-glucosamine 6-phosphate (route II): step 2/2. It functions in the pathway nucleotide-sugar biosynthesis; UDP-N-acetyl-alpha-D-glucosamine biosynthesis; UDP-N-acetyl-alpha-D-glucosamine from N-acetyl-alpha-D-glucosamine 1-phosphate: step 1/1. The protein operates within bacterial outer membrane biogenesis; LPS lipid A biosynthesis. Its function is as follows. Catalyzes the last two sequential reactions in the de novo biosynthetic pathway for UDP-N-acetylglucosamine (UDP-GlcNAc). The C-terminal domain catalyzes the transfer of acetyl group from acetyl coenzyme A to glucosamine-1-phosphate (GlcN-1-P) to produce N-acetylglucosamine-1-phosphate (GlcNAc-1-P), which is converted into UDP-GlcNAc by the transfer of uridine 5-monophosphate (from uridine 5-triphosphate), a reaction catalyzed by the N-terminal domain. The protein is Bifunctional protein GlmU of Exiguobacterium sp. (strain ATCC BAA-1283 / AT1b).